A 237-amino-acid polypeptide reads, in one-letter code: N-demethylindolmycin N-methyltransferase (237 aa).

This sequence belongs to the methyltransferase superfamily.

The enzyme catalyses N-demethylindolmycin + S-adenosyl-L-methionine = indolmycin + S-adenosyl-L-homocysteine + H(+). Involved in the biosynthesis of the antibiotic indolmycin, an inhibitor of the bacterial tryptophan-tRNA synthetases. Catalyzes the methylation of N-demethylindolmycin to yield indolmycin, with S-adenosylmethionine (AdoMet) acting as the methyl donor. The protein is N-demethylindolmycin N-methyltransferase of Streptomyces griseus.